Reading from the N-terminus, the 495-residue chain is Glycerol kinase (495 aa).

Residue Thr-13 coordinates ADP. ATP contacts are provided by Thr-13, Thr-14, and Ser-15. Thr-13 is a sn-glycerol 3-phosphate binding site. Residue Arg-17 participates in ADP binding. Residues Arg-83, Glu-84, Tyr-135, and Asp-244 each contribute to the sn-glycerol 3-phosphate site. Glycerol contacts are provided by Arg-83, Glu-84, Tyr-135, Asp-244, and Gln-245. Residues Thr-266 and Gly-309 each contribute to the ADP site. Residues Thr-266, Gly-309, Gln-313, and Gly-410 each coordinate ATP. ADP-binding residues include Gly-410 and Asn-414.

This sequence belongs to the FGGY kinase family.

The enzyme catalyses glycerol + ATP = sn-glycerol 3-phosphate + ADP + H(+). The protein operates within polyol metabolism; glycerol degradation via glycerol kinase pathway; sn-glycerol 3-phosphate from glycerol: step 1/1. Its activity is regulated as follows. Inhibited by fructose 1,6-bisphosphate (FBP). Functionally, key enzyme in the regulation of glycerol uptake and metabolism. Catalyzes the phosphorylation of glycerol to yield sn-glycerol 3-phosphate. The chain is Glycerol kinase from Shewanella woodyi (strain ATCC 51908 / MS32).